The chain runs to 575 residues: Delta-selinene-like synthase, chloroplastic (575 aa).

5 residues coordinate (2E,6E)-farnesyl diphosphate: arginine 288, aspartate 325, aspartate 329, arginine 466, and aspartate 469. Mg(2+) is bound by residues aspartate 325 and aspartate 329. Residues 325–329 (DDLYD) carry the DDXXD motif motif. The Mg(2+) site is built by aspartate 469 and glutamate 477.

The protein belongs to the terpene synthase family. Tpsb subfamily. As to quaternary structure, monomer. It depends on Mg(2+) as a cofactor. The cofactor is Mn(2+).

It is found in the plastid. It localises to the chloroplast. The catalysed reaction is (2E,6E)-farnesyl diphosphate = (+)-delta-selinene + diphosphate. It functions in the pathway secondary metabolite biosynthesis; terpenoid biosynthesis. Its pathway is terpene metabolism; oleoresin biosynthesis. Its function is as follows. Sesquiterpene synthase (sesqui-TPS) involved in the biosynthesis of sesquiterpene natural products. Catalyzes the conversion of (2E)-geranyl diphosphate (GPP) into delta-selinene. This is Delta-selinene-like synthase, chloroplastic from Picea sitchensis (Sitka spruce).